Here is an 808-residue protein sequence, read N- to C-terminus: Anaphase-promoting complex subunit 4 (808 aa).

Phosphotyrosine is present on Tyr469. 2 positions are modified to phosphoserine: Ser757 and Ser758. Lys772 is covalently cross-linked (Glycyl lysine isopeptide (Lys-Gly) (interchain with G-Cter in SUMO2)). Phosphoserine occurs at positions 777 and 779. Lys798 is covalently cross-linked (Glycyl lysine isopeptide (Lys-Gly) (interchain with G-Cter in SUMO2)).

Belongs to the APC4 family. The mammalian APC/C is composed at least of 14 distinct subunits ANAPC1, ANAPC2, CDC27/APC3, ANAPC4, ANAPC5, CDC16/APC6, ANAPC7, CDC23/APC8, ANAPC10, ANAPC11, CDC26/APC12, ANAPC13, ANAPC15 and ANAPC16 that assemble into a complex of at least 19 chains with a combined molecular mass of around 1.2 MDa; APC/C interacts with FZR1 and FBXO5. In the context of the APC/C complex, directly interacts with UBE2S. Interacts with FBXO43.

Its subcellular location is the nucleus. The protein operates within protein modification; protein ubiquitination. Functionally, component of the anaphase promoting complex/cyclosome (APC/C), a cell cycle-regulated E3 ubiquitin ligase that controls progression through mitosis and the G1 phase of the cell cycle. The APC/C complex acts by mediating ubiquitination and subsequent degradation of target proteins: it mainly mediates the formation of 'Lys-11'-linked polyubiquitin chains and, to a lower extent, the formation of 'Lys-48'- and 'Lys-63'-linked polyubiquitin chains. The APC/C complex catalyzes assembly of branched 'Lys-11'-/'Lys-48'-linked branched ubiquitin chains on target proteins. This chain is Anaphase-promoting complex subunit 4 (ANAPC4), found in Homo sapiens (Human).